Here is a 620-residue protein sequence, read N- to C-terminus: DNA mismatch repair protein MutL (620 aa).

Residues 332-402 (SELGLEAQPE…YRTPLRPATH (71 aa)) are disordered. The span at 352–365 (SNSTNSNVSSTSYS) shows a compositional bias: low complexity. Residues 378–394 (PLTTTATSYNQGQSSYR) show a composition bias toward polar residues.

Belongs to the DNA mismatch repair MutL/HexB family.

This protein is involved in the repair of mismatches in DNA. It is required for dam-dependent methyl-directed DNA mismatch repair. May act as a 'molecular matchmaker', a protein that promotes the formation of a stable complex between two or more DNA-binding proteins in an ATP-dependent manner without itself being part of a final effector complex. The polypeptide is DNA mismatch repair protein MutL (Shewanella piezotolerans (strain WP3 / JCM 13877)).